Consider the following 126-residue polypeptide: MNFPQNVKYTNEHEWIRLEGDVAYVGITDYAQEQLGDIVFVDIPTEGETLEAGEVFGTIEVVKTISDLFLPVAGEVVEQNPALEENPELVNKDPYGEGWLIKMKPANAADLDNLLDAEGYKAVVNA.

The 83-residue stretch at 22–104 (VAYVGITDYA…YGEGWLIKMK (83 aa)) folds into the Lipoyl-binding domain. N6-lipoyllysine is present on Lys63.

It belongs to the GcvH family. As to quaternary structure, the glycine cleavage system is composed of four proteins: P, T, L and H. The cofactor is (R)-lipoate.

Functionally, the glycine cleavage system catalyzes the degradation of glycine. The H protein shuttles the methylamine group of glycine from the P protein to the T protein. In Bacteroides fragilis (strain ATCC 25285 / DSM 2151 / CCUG 4856 / JCM 11019 / LMG 10263 / NCTC 9343 / Onslow / VPI 2553 / EN-2), this protein is Glycine cleavage system H protein.